The chain runs to 700 residues: Protein UL29/28 (700 aa).

Residues 1 to 30 (MSGRRKGCSAATASSSSSSPPSRLPLPGHA) are disordered. Over residues 9-21 (SAATASSSSSSPP) the composition is skewed to low complexity.

It belongs to the herpesviridae US22 family. In terms of assembly, interacts with UL38 and host HDAC1; these interactions are necessary for the HDAC1 interaction with UL38. Interacts with host MTA2.

It is found in the virion. The protein resides in the host nucleus. Its subcellular location is the host cytoplasm. In terms of biological role, contributes to activation of immediate-early gene expression. The sequence is that of Protein UL29/28 (UL29) from Human cytomegalovirus (strain Merlin) (HHV-5).